Reading from the N-terminus, the 432-residue chain is Glutamate-1-semialdehyde 2,1-aminomutase 1 (432 aa).

Lys-268 is subject to N6-(pyridoxal phosphate)lysine.

Belongs to the class-III pyridoxal-phosphate-dependent aminotransferase family. HemL subfamily. As to quaternary structure, homodimer. It depends on pyridoxal 5'-phosphate as a cofactor.

It is found in the cytoplasm. It carries out the reaction (S)-4-amino-5-oxopentanoate = 5-aminolevulinate. Its pathway is porphyrin-containing compound metabolism; protoporphyrin-IX biosynthesis; 5-aminolevulinate from L-glutamyl-tRNA(Glu): step 2/2. The chain is Glutamate-1-semialdehyde 2,1-aminomutase 1 from Bacillus mycoides (strain KBAB4) (Bacillus weihenstephanensis).